The following is a 330-amino-acid chain: Virulence plasmid integrase pGP8-D (330 aa).

The Core-binding (CB) domain occupies 39-124 (FSLFEVIMHW…SYISLTRFLN (86 aa)). The Tyr recombinase domain maps to 152 to 327 (VKTDAMNSLQ…SREDNASKKM (176 aa)). Residues arginine 189, lysine 214, histidine 279, arginine 282, and histidine 305 contribute to the active site. Tyrosine 314 functions as the O-(3'-phospho-DNA)-tyrosine intermediate in the catalytic mechanism.

Belongs to the 'phage' integrase family.

The sequence is that of Virulence plasmid integrase pGP8-D from Chlamydia trachomatis serovar L2 (strain ATCC VR-902B / DSM 19102 / 434/Bu).